The chain runs to 564 residues: Tripeptidyl-peptidase 1 (564 aa).

Residues 1-19 (MGLQACLLGLFALILSGKC) form the signal peptide. Positions 20-195 (SYSPEPDQRR…PEPQVTGTVG (176 aa)) are cleaved as a propeptide — removed in mature form. Residues C111 and C122 are joined by a disulfide bond. A Peptidase S53 domain is found at 199 to 564 (GVTPSVIRKR…PALPKTLLNP (366 aa)). N-linked (GlcNAc...) asparagine glycans are attached at residues N210 and N222. Active-site charge relay system residues include E272 and D276. N-linked (GlcNAc...) asparagine glycosylation is found at N286, N313, and N443. 2 cysteine pairs are disulfide-bonded: C365/C527 and C523/C538. Catalysis depends on S475, which acts as the Charge relay system. Residues D518 and V519 each coordinate Ca(2+). Residues G540, G542, and D544 each coordinate Ca(2+).

In terms of assembly, monomer. Interacts with CLN5. Interacts with CLN3. The cofactor is Ca(2+). Post-translationally, activated by autocatalytic proteolytical processing upon acidification. N-glycosylation is required for processing and activity.

The protein resides in the lysosome. Its subcellular location is the melanosome. It carries out the reaction Release of an N-terminal tripeptide from a polypeptide, but also has endopeptidase activity.. Its function is as follows. Lysosomal serine protease with tripeptidyl-peptidase I activity. May act as a non-specific lysosomal peptidase which generates tripeptides from the breakdown products produced by lysosomal proteinases. Requires substrates with an unsubstituted N-terminus. This Pongo abelii (Sumatran orangutan) protein is Tripeptidyl-peptidase 1 (TPP1).